The primary structure comprises 512 residues: GMP synthase [glutamine-hydrolyzing] (512 aa).

In terms of domain architecture, Glutamine amidotransferase type-1 spans 7-197 (TIIVLDFGSQ…VFGVCGCSEG (191 aa)). Cys84 (nucleophile) is an active-site residue. Active-site residues include His171 and Glu173. Positions 198–387 (WNMENFIEVE…LGIPDEIVWR (190 aa)) constitute a GMPS ATP-PPase domain. ATP is bound at residue 225 to 231 (SGGVDSS).

Homodimer.

The enzyme catalyses XMP + L-glutamine + ATP + H2O = GMP + L-glutamate + AMP + diphosphate + 2 H(+). It functions in the pathway purine metabolism; GMP biosynthesis; GMP from XMP (L-Gln route): step 1/1. Functionally, catalyzes the synthesis of GMP from XMP. The sequence is that of GMP synthase [glutamine-hydrolyzing] from Bacillus cereus (strain ATCC 10987 / NRS 248).